The chain runs to 417 residues: Gamma-glutamyl phosphate reductase (417 aa).

It belongs to the gamma-glutamyl phosphate reductase family.

Its subcellular location is the cytoplasm. It carries out the reaction L-glutamate 5-semialdehyde + phosphate + NADP(+) = L-glutamyl 5-phosphate + NADPH + H(+). It participates in amino-acid biosynthesis; L-proline biosynthesis; L-glutamate 5-semialdehyde from L-glutamate: step 2/2. Catalyzes the NADPH-dependent reduction of L-glutamate 5-phosphate into L-glutamate 5-semialdehyde and phosphate. The product spontaneously undergoes cyclization to form 1-pyrroline-5-carboxylate. The protein is Gamma-glutamyl phosphate reductase of Clostridium novyi (strain NT).